A 352-amino-acid chain; its full sequence is uncharacterized protein (352 aa).

Residues 1–55 (MAMAALTSSSSAITLLNKPFLPNRSSFFSSDSQSPLLRFSASTSVRSRFPSAAIS) constitute a chloroplast transit peptide.

This sequence belongs to the methyltransferase superfamily.

Its subcellular location is the plastid. It localises to the chloroplast. It is found in the plastoglobule. This is an uncharacterized protein from Arabidopsis thaliana (Mouse-ear cress).